The primary structure comprises 406 residues: GTPase Obg (406 aa).

The region spanning 1–159 is the Obg domain; the sequence is MKFVDEVSIF…RDLKLELKVL (159 aa). The tract at residues 126–149 is disordered; that stretch reads GNTRFKSSTNRAPRQTTPGKPGES. A compositionally biased stretch (polar residues) spans 129 to 143; it reads RFKSSTNRAPRQTTP. The 174-residue stretch at 160–333 folds into the OBG-type G domain; it reads ADVGLLGLPN…ICRDIMHYLE (174 aa). GTP-binding positions include 166–173, 191–195, 213–216, 283–286, and 314–316; these read GLPNAGKS, FTTLV, DIPG, NKMD, and SAI. Ser173 and Thr193 together coordinate Mg(2+). The tract at residues 376–406 is disordered; it reads SGVRSVDDIDEDDDFFDDEDDDGPEIIYVRD. A compositionally biased stretch (acidic residues) spans 383–399; the sequence is DIDEDDDFFDDEDDDGP.

It belongs to the TRAFAC class OBG-HflX-like GTPase superfamily. OBG GTPase family. Monomer. The cofactor is Mg(2+).

It localises to the cytoplasm. Functionally, an essential GTPase which binds GTP, GDP and possibly (p)ppGpp with moderate affinity, with high nucleotide exchange rates and a fairly low GTP hydrolysis rate. Plays a role in control of the cell cycle, stress response, ribosome biogenesis and in those bacteria that undergo differentiation, in morphogenesis control. This Ectopseudomonas mendocina (strain ymp) (Pseudomonas mendocina) protein is GTPase Obg.